A 746-amino-acid polypeptide reads, in one-letter code: Protein zyg-11 homolog (746 aa).

3 LRR repeats span residues 185–209, 216–241, and 265–289; these read LPRL…GLRS, MHQL…VLQH, and LPQL…AFVE.

The protein belongs to the zyg-11 family.

Functionally, serves as substrate adapter subunit in an E3 ubiquitin ligase complex zyg11-cul2-elongin BC. Targets substrates bearing N-terminal glycine degrons for proteasomal degradation. The sequence is that of Protein zyg-11 homolog (zyg11) from Danio rerio (Zebrafish).